The primary structure comprises 468 residues: Na(+)/H(+) antiporter NhaA (468 aa).

Helical transmembrane passes span 32-52 (FLHI…IALL), 83-103 (LHFW…GMEI), 119-139 (ALPM…YLAI), 148-168 (GWAV…ALLG), 178-198 (FLLA…AVAF), 205-225 (GGFL…WIGV), 320-340 (ALHP…NAGV), 354-374 (GAMF…IVSV), 397-417 (LVGL…TLAF), and 428-448 (LGVL…GFIY).

This sequence belongs to the NhaA Na(+)/H(+) (TC 2.A.33) antiporter family.

The protein resides in the cell inner membrane. The catalysed reaction is Na(+)(in) + 2 H(+)(out) = Na(+)(out) + 2 H(+)(in). Its function is as follows. Na(+)/H(+) antiporter that extrudes sodium in exchange for external protons. The chain is Na(+)/H(+) antiporter NhaA from Cupriavidus necator (strain ATCC 17699 / DSM 428 / KCTC 22496 / NCIMB 10442 / H16 / Stanier 337) (Ralstonia eutropha).